A 43-amino-acid polypeptide reads, in one-letter code: Protein PsbN (43 aa).

The chain crosses the membrane as a helical span at residues 7 to 27 (IAISISGLLVSFTGYALYIAF).

This sequence belongs to the PsbN family.

Its subcellular location is the plastid. The protein localises to the chloroplast thylakoid membrane. Its function is as follows. May play a role in photosystem I and II biogenesis. The chain is Protein PsbN from Glycine max (Soybean).